A 1427-amino-acid chain; its full sequence is ATP-binding cassette transporter abc1 (1427 aa).

A helical membrane pass occupies residues 26-46; the sequence is LLLFYLSLFSLTNLFLIQKLF. The N-linked (GlcNAc...) asparagine glycan is linked to asparagine 49. The next 9 helical transmembrane spans lie at 63-83, 87-107, 115-135, 155-175, 197-217, 262-282, 298-318, 345-367, and 397-417; these read CLLEYIQIILSIVSAALSFYL, AVWWAIRTITHLEIVGLNILS, LFSWISVANAFGLLLLRLISI, LLLPLAYNITLFLLVIIPLFF, CSIFSLIFTYGWLNGIIWKSW, ILLMVFLSVLVSSTLFVTPLA, GNSPFLWVFVLLIGPYLASVV, VLTSKTLFVAVDGSKINLDYVYN, and MYFLYQLLGWSAYVGLLLAIL. The ABC transmembrane type-1 1 domain occupies 262-549; sequence ILLMVFLSVL…LASVSRQFIQ (288 aa). N-linked (GlcNAc...) asparagine glycosylation occurs at asparagine 437. Helical transmembrane passes span 489 to 509 and 513 to 533; these read IIFKSGMKIAPFISMFITFAI and IMGHQLTPATAFTSISMFGLL. 3 N-linked (GlcNAc...) asparagine glycosylation sites follow: asparagine 567, asparagine 581, and asparagine 601. The 229-residue stretch at 579–807 folds into the ABC transporter 1 domain; that stretch reads FENTSLSWSP…PSTFFSSNTK (229 aa). Residues 609-629 form a helical membrane-spanning segment; sequence FTLVVGSTGSGKSTLAMALLG. Residue 614–621 coordinates ATP; sequence GSTGSGKS. Residues asparagine 658 and asparagine 703 are each glycosylated (N-linked (GlcNAc...) asparagine). A helical membrane pass occupies residues 760–780; sequence IILFTHNVSLCLPIAENVIVL. Residues asparagine 782 and asparagine 842 are each glycosylated (N-linked (GlcNAc...) asparagine). Residues 862–1142 form the ABC transmembrane type-1 2 domain; it reads ILGSILLVMM…FVRANNEILT (281 aa). Helical transmembrane passes span 866 to 886, 896 to 916, and 973 to 993; these read ILLVMMSQVSLASIHFWIALW, LPSSFSFLWGYAILLFIYFLM, and LLWASLEGMLLCVMAILITML. Asparagine 994 carries an N-linked (GlcNAc...) asparagine glycan. A run of 3 helical transmembrane segments spans residues 995-1015, 1086-1106, and 1114-1134; these read VTLVMPIFMVPAAFVSLLVYL, LAIRTDGISGLVGFSTGLIAL, and GLVGFSLNSAIGFNISVLVFV. N-linked (GlcNAc...) asparagine glycans are attached at residues asparagine 1161 and asparagine 1184. Residues 1180–1422 enclose the ABC transporter 2 domain; that stretch reads VSIKNLTVSY…RRAFWKMCKE (243 aa). ATP is bound at residue 1214–1221; that stretch reads GRTGSGKS. The chain crosses the membrane as a helical span at residues 1223-1243; it reads MGLTLLRFTMIMSGAVEVDGI. A glycan (N-linked (GlcNAc...) asparagine) is linked at asparagine 1324.

This sequence belongs to the ABC transporter superfamily. ABCC family. Conjugate transporter (TC 3.A.1.208) subfamily.

The protein resides in the membrane. In Schizosaccharomyces pombe (strain 972 / ATCC 24843) (Fission yeast), this protein is ATP-binding cassette transporter abc1 (abc1).